The sequence spans 205 residues: Dephospho-CoA kinase (205 aa).

The 198-residue stretch at 7-204 (LVGLTGGIGS…ARYLAAARAT (198 aa)) folds into the DPCK domain. 15–20 (GSGKSA) lines the ATP pocket.

The protein belongs to the CoaE family.

It is found in the cytoplasm. It carries out the reaction 3'-dephospho-CoA + ATP = ADP + CoA + H(+). Its pathway is cofactor biosynthesis; coenzyme A biosynthesis; CoA from (R)-pantothenate: step 5/5. Its function is as follows. Catalyzes the phosphorylation of the 3'-hydroxyl group of dephosphocoenzyme A to form coenzyme A. This chain is Dephospho-CoA kinase, found in Aromatoleum aromaticum (strain DSM 19018 / LMG 30748 / EbN1) (Azoarcus sp. (strain EbN1)).